Here is a 299-residue protein sequence, read N- to C-terminus: Protein N-terminal and lysine N-methyltransferase EFM7 (299 aa).

S-adenosyl-L-methionine is bound by residues tryptophan 74, 100-102 (GAG), aspartate 122, tryptophan 155, and serine 178.

Belongs to the class I-like SAM-binding methyltransferase superfamily. EFM7 family.

It is found in the cytoplasm. S-adenosyl-L-methionine-dependent protein methyltransferase that trimethylates the N-terminal glycine 'Gly-2' of elongation factor 1-alpha, before also catalyzing the mono- and dimethylation of 'Lys-3'. This Cryptococcus neoformans var. neoformans serotype D (strain B-3501A) (Filobasidiella neoformans) protein is Protein N-terminal and lysine N-methyltransferase EFM7.